The following is a 454-amino-acid chain: L-serine dehydratase 1 (454 aa).

The protein belongs to the iron-sulfur dependent L-serine dehydratase family. It depends on [4Fe-4S] cluster as a cofactor. Activated by post-translational modification by a system involving at least three gene products. Activation is mimicked in vitro by iron and dithiothreitol. There is considerable evidence for a free-radical activation mechanism.

It catalyses the reaction L-serine = pyruvate + NH4(+). It participates in carbohydrate biosynthesis; gluconeogenesis. Also deaminates threonine, particularly when it is present in high concentration. This Escherichia coli (strain K12) protein is L-serine dehydratase 1 (sdaA).